Reading from the N-terminus, the 1846-residue chain is C2 domain-containing protein (1846 aa).

A disordered region spans residues asparagine 16 to glutamine 36. Positions threonine 17–glutamate 26 are enriched in basic and acidic residues. Residues isoleucine 27–glutamine 36 are compositionally biased toward polar residues. The 127-residue stretch at valine 497 to lysine 623 folds into the C2 domain. Basic and acidic residues-rich tracts occupy residues aspartate 1193–lysine 1211 and lysine 1230–lysine 1243. Disordered regions lie at residues aspartate 1193 to serine 1244, lysine 1346 to aspartate 1370, lysine 1456 to valine 1635, asparagine 1652 to arginine 1692, and glutamate 1827 to asparagine 1846. Residues isoleucine 1349–methionine 1506 are a coiled coil. 4 stretches are compositionally biased toward basic and acidic residues: residues lysine 1456 to lysine 1474, glutamate 1481 to glutamate 1629, asparagine 1652 to glutamate 1663, and lysine 1670 to arginine 1692. Over residues serine 1834–asparagine 1846 the composition is skewed to basic residues.

It localises to the membrane. Functionally, binds calcium and phospholipids. Regulates microneme secretion. The sequence is that of C2 domain-containing protein from Plasmodium falciparum (isolate 3D7).